Reading from the N-terminus, the 614-residue chain is Replication protein A 70 kDa DNA-binding subunit (614 aa).

Positions 112 to 178 are disordered; sequence GNPVPYNEGQ…SSVKTPGGTQ (67 aa). 2 stretches are compositionally biased toward polar residues: residues 120–130 and 158–178; these read GQGQQRSSAPT and PSNQ…GGTQ. Positions 194 to 278 form a DNA-binding region, OB; the sequence is WTICARVTQK…VKNDYEITFN (85 aa). The C4-type zinc finger occupies 478–500; sequence CPSQDCNKKVIDQQNGLYRCEKC.

It belongs to the replication factor A protein 1 family. As to quaternary structure, component of the heterotrimeric canonical replication protein A complex (RPA).

It localises to the nucleus. It is found in the PML body. Functionally, as part of the heterotrimeric replication protein A complex (RPA/RP-A), binds and stabilizes single-stranded DNA intermediates, that form during DNA replication or upon DNA stress. It prevents their reannealing and in parallel, recruits and activates different proteins and complexes involved in DNA metabolism. Thereby, it plays an essential role both in DNA replication and the cellular response to DNA damage. The protein is Replication protein A 70 kDa DNA-binding subunit (RPA1) of Gallus gallus (Chicken).